The primary structure comprises 737 residues: uncharacterized protein (737 aa).

Helical transmembrane passes span 11–31, 36–56, 60–80, 118–138, 142–162, 164–184, and 200–220; these read LSLLLFYFLAFLLLWEWLRPL, ETKHTGFFSVFIGLTFLLTFF, WFVTVPFCVIFTLISIHILFY, TLLFFVLLWLLVYLLHYWVIY, ILFFFLMTVAYITILDTFTPY, ATFAVIRIVLIGFFMLGLLYL, and VLKWFLPLSVLVLAATGFGLA. Positions 556–611 are disordered; the sequence is PAQFTSSDTKDSGSDSSSSPKKAKEKQKEEKKQPQKEEKQKEKREPAVSKKPSASH. Residues 581-603 are compositionally biased toward basic and acidic residues; it reads KQKEEKKQPQKEEKQKEKREPAV. A helical membrane pass occupies residues 618–638; sequence LYAALAVLAVLLVAAVLLYVF.

Its subcellular location is the cell membrane. This is an uncharacterized protein from Bacillus subtilis (strain 168).